Here is a 392-residue protein sequence, read N- to C-terminus: tRNA (guanine-N(7)-)-methyltransferase (392 aa).

Residues glutamate 123, glutamate 148, and aspartate 175 each contribute to the S-adenosyl-L-methionine site. Substrate-binding residues include lysine 201 and aspartate 231.

The protein belongs to the class I-like SAM-binding methyltransferase superfamily. TrmB family.

It carries out the reaction guanosine(46) in tRNA + S-adenosyl-L-methionine = N(7)-methylguanosine(46) in tRNA + S-adenosyl-L-homocysteine. It participates in tRNA modification; N(7)-methylguanine-tRNA biosynthesis. In terms of biological role, catalyzes the formation of N(7)-methylguanine at position 46 (m7G46) in tRNA. In Campylobacter jejuni subsp. jejuni serotype O:6 (strain 81116 / NCTC 11828), this protein is tRNA (guanine-N(7)-)-methyltransferase.